Consider the following 209-residue polypeptide: Large ribosomal subunit protein uL3 (209 aa).

A disordered region spans residues 126-148; it reads HGQSRGPMAHGSRYHRRPGSMGP.

It belongs to the universal ribosomal protein uL3 family. Part of the 50S ribosomal subunit. Forms a cluster with proteins L14 and L19.

One of the primary rRNA binding proteins, it binds directly near the 3'-end of the 23S rRNA, where it nucleates assembly of the 50S subunit. This is Large ribosomal subunit protein uL3 from Listeria innocua serovar 6a (strain ATCC BAA-680 / CLIP 11262).